Reading from the N-terminus, the 508-residue chain is 6-phosphogluconate dehydrogenase, decarboxylating 2, chloroplastic (508 aa).

The N-terminal 12 residues, 1 to 12, are a transit peptide targeting the chloroplast; that stretch reads MASPAPAPPAAS. Residues 28-33, 51-53, 95-97, and N123 contribute to the NADP(+) site; these read GLATMG, NRT, and VQA. Substrate is bound by residues N123 and 149–151; that span reads SGG. K203 (proton acceptor) is an active-site residue. 206–207 is a binding site for substrate; that stretch reads HN. Catalysis depends on E210, which acts as the Proton donor. Residues Y211, K284, R311, R475, and H481 each coordinate substrate.

This sequence belongs to the 6-phosphogluconate dehydrogenase family. Homodimer.

It localises to the plastid. It is found in the chloroplast. It catalyses the reaction 6-phospho-D-gluconate + NADP(+) = D-ribulose 5-phosphate + CO2 + NADPH. The protein operates within carbohydrate degradation; pentose phosphate pathway; D-ribulose 5-phosphate from D-glucose 6-phosphate (oxidative stage): step 3/3. In terms of biological role, catalyzes the oxidative decarboxylation of 6-phosphogluconate to ribulose 5-phosphate and CO(2), with concomitant reduction of NADP to NADPH. The polypeptide is 6-phosphogluconate dehydrogenase, decarboxylating 2, chloroplastic (G6PGH2) (Oryza sativa subsp. japonica (Rice)).